We begin with the raw amino-acid sequence, 430 residues long: Adenylosuccinate synthetase (430 aa).

GTP contacts are provided by residues 12 to 18 (GDEGKGK) and 40 to 42 (GHT). Asp13 serves as the catalytic Proton acceptor. 2 residues coordinate Mg(2+): Asp13 and Gly40. Residues 13–16 (DEGK), 38–41 (NAGH), Thr130, Arg144, Gln224, Thr239, and Arg303 contribute to the IMP site. His41 serves as the catalytic Proton donor. 299–305 (TVTGRKR) is a binding site for substrate. GTP-binding positions include Arg305, 331 to 333 (KLD), and 413 to 415 (STS).

It belongs to the adenylosuccinate synthetase family. As to quaternary structure, homodimer. The cofactor is Mg(2+).

Its subcellular location is the cytoplasm. The catalysed reaction is IMP + L-aspartate + GTP = N(6)-(1,2-dicarboxyethyl)-AMP + GDP + phosphate + 2 H(+). It participates in purine metabolism; AMP biosynthesis via de novo pathway; AMP from IMP: step 1/2. Functionally, plays an important role in the de novo pathway of purine nucleotide biosynthesis. Catalyzes the first committed step in the biosynthesis of AMP from IMP. This chain is Adenylosuccinate synthetase, found in Methylorubrum extorquens (strain CM4 / NCIMB 13688) (Methylobacterium extorquens).